Reading from the N-terminus, the 214-residue chain is Large ribosomal subunit protein uL3 (214 aa).

Glutamine 153 bears the N5-methylglutamine mark.

The protein belongs to the universal ribosomal protein uL3 family. As to quaternary structure, part of the 50S ribosomal subunit. Forms a cluster with proteins L14 and L19. Post-translationally, methylated by PrmB.

Its function is as follows. One of the primary rRNA binding proteins, it binds directly near the 3'-end of the 23S rRNA, where it nucleates assembly of the 50S subunit. The chain is Large ribosomal subunit protein uL3 from Methylobacillus flagellatus (strain ATCC 51484 / DSM 6875 / VKM B-1610 / KT).